The sequence spans 625 residues: Endoglucanase 13 (625 aa).

The signal sequence occupies residues methionine 1–alanine 34. The active-site Nucleophile is the aspartate 91. Histidine 427 is an active-site residue. Asparagine 440 carries N-linked (GlcNAc...) asparagine glycosylation. Active-site residues include aspartate 479 and glutamate 488. The tract at residues alanine 509–proline 530 is disordered.

It belongs to the glycosyl hydrolase 9 (cellulase E) family. Expressed in roots and flowers.

It localises to the secreted. The enzyme catalyses Endohydrolysis of (1-&gt;4)-beta-D-glucosidic linkages in cellulose, lichenin and cereal beta-D-glucans.. The chain is Endoglucanase 13 (GLU6) from Oryza sativa subsp. japonica (Rice).